Consider the following 604-residue polypeptide: Linalool synthase Tps-5073L4, chloroplastic (604 aa).

The transit peptide at 1–36 (MSSMRIYVAIMKKPSVKHVDYVDKKASKPSWRVSSS) directs the protein to the chloroplast. Positions 323, 360, 364, 501, and 504 each coordinate (2E)-geranyl diphosphate. 2 residues coordinate Mg(2+): Asp-360 and Asp-364. Residues 360 to 364 (DDVYD) carry the DDXXD motif motif. Residues Asp-504, Thr-508, and Glu-512 each contribute to the Mg(2+) site.

The protein belongs to the terpene synthase family. Tpsb subfamily. As to quaternary structure, monomer. The cofactor is Mg(2+). Mn(2+) is required as a cofactor.

It localises to the plastid. The protein localises to the chloroplast. It catalyses the reaction (2E)-geranyl diphosphate + H2O = linalool + diphosphate. It functions in the pathway secondary metabolite biosynthesis; terpenoid biosynthesis. Monoterpene synthase (mono-TPS) involved in the biosynthesis of monoterpenes natural products. Catalyzes the conversion of (2E)-geranyl diphosphate (GPP) into linalool. This chain is Linalool synthase Tps-5073L4, chloroplastic, found in Perilla frutescens (Beefsteak mint).